A 61-amino-acid polypeptide reads, in one-letter code: Protein translocase subunit SecE (61 aa).

Residues 39–59 (LGIILIGLIGMLIRIMGILVL) form a helical membrane-spanning segment.

Belongs to the SecE/SEC61-gamma family. Component of the Sec protein translocase complex. Heterotrimer consisting of SecY (alpha), SecG (beta) and SecE (gamma) subunits. The heterotrimers can form oligomers, although 1 heterotrimer is thought to be able to translocate proteins. Interacts with the ribosome. May interact with SecDF, and other proteins may be involved.

It localises to the cell membrane. Essential subunit of the Sec protein translocation channel SecYEG. Clamps together the 2 halves of SecY. May contact the channel plug during translocation. The sequence is that of Protein translocase subunit SecE from Pyrococcus abyssi (strain GE5 / Orsay).